A 119-amino-acid polypeptide reads, in one-letter code: Holo-[acyl-carrier-protein] synthase (119 aa).

Mg(2+)-binding residues include Asp5 and Glu51.

It belongs to the P-Pant transferase superfamily. AcpS family. Requires Mg(2+) as cofactor.

Its subcellular location is the cytoplasm. The enzyme catalyses apo-[ACP] + CoA = holo-[ACP] + adenosine 3',5'-bisphosphate + H(+). Its function is as follows. Transfers the 4'-phosphopantetheine moiety from coenzyme A to a Ser of acyl-carrier-protein. The polypeptide is Holo-[acyl-carrier-protein] synthase (Helicobacter pylori (strain G27)).